Consider the following 302-residue polypeptide: GLABROUS1 enhancer-binding protein (302 aa).

Disordered stretches follow at residues 1–55 and 158–229; these read MVTP…MKKK and GQGD…NDDD. S27 carries the post-translational modification Phosphoserine. The span at 180 to 195 shows a compositional bias: basic and acidic residues; the sequence is RTNESGEEMLKEHEEE. Residues 208–217 are compositionally biased toward polar residues; it reads AKTTENGTSS. Residues 270–291 form a non-canonical leucine-zipper region; it reads LSDEWKALCVEETRFNIKKLRF.

This sequence belongs to the GeBP family. Homo- and heterodimers. Interacts with GPL1, GPL2 and GPL3. Interacts with KIN10, KIN11 and FLZ4. Interacts with KIN10 and KIN11 via its N-terminal part. Interacts with GPL1 and GPL3 via its C-terminal part. In terms of tissue distribution, expressed in the apical meristem and young leaf primordia. Not detected in emerging or mature leaves. Detected in the vascular tissues of cotyledons and leaves, in hydathodes and at the base of flowers and siliques, but not in roots.

The protein localises to the nucleus. It is found in the nucleolus. Its function is as follows. DNA-binding protein, which specifically recognizes the GL1 enhancer sequence. May be involved in leaf initiation. May play redundant roles with GPL1 and GPL2 in cytokinin responses by regulating the transcript levels of type-A ARR response genes. Involved in stress responses. Plays a repressive role in cell expansion by counteracting the positive role of CPR5 in this process, but does not regulate cell proliferation or endoreduplication. May play a role in plant defense. In Arabidopsis thaliana (Mouse-ear cress), this protein is GLABROUS1 enhancer-binding protein.